The chain runs to 539 residues: ATP synthase subunit beta (539 aa).

Residues 1–44 form a disordered region; it reads MAKTPAEKPATAAKKPAAPKAAAAPKAAAAKAPAAAKAPAAKKP. 212-219 provides a ligand contact to ATP; sequence GGAGVGKT.

The protein belongs to the ATPase alpha/beta chains family. As to quaternary structure, F-type ATPases have 2 components, CF(1) - the catalytic core - and CF(0) - the membrane proton channel. CF(1) has five subunits: alpha(3), beta(3), gamma(1), delta(1), epsilon(1). CF(0) has three main subunits: a(1), b(2) and c(9-12). The alpha and beta chains form an alternating ring which encloses part of the gamma chain. CF(1) is attached to CF(0) by a central stalk formed by the gamma and epsilon chains, while a peripheral stalk is formed by the delta and b chains.

Its subcellular location is the cell inner membrane. The enzyme catalyses ATP + H2O + 4 H(+)(in) = ADP + phosphate + 5 H(+)(out). Functionally, produces ATP from ADP in the presence of a proton gradient across the membrane. The catalytic sites are hosted primarily by the beta subunits. The polypeptide is ATP synthase subunit beta (Caulobacter vibrioides (strain ATCC 19089 / CIP 103742 / CB 15) (Caulobacter crescentus)).